Consider the following 415-residue polypeptide: ATP-dependent Clp protease ATP-binding subunit ClpX (415 aa).

The ClpX-type ZB domain occupies 1 to 54 (MARNRMGGALICSFCNKPESSERFVVPGPGGIAICDRCVDLCESYIKSYKTVRP). Zn(2+)-binding residues include C12, C15, C35, and C38. Residue 117–124 (PTGSGKTL) participates in ATP binding.

This sequence belongs to the ClpX chaperone family. Component of the ClpX-ClpP complex. Forms a hexameric ring that, in the presence of ATP, binds to fourteen ClpP subunits assembled into a disk-like structure with a central cavity, resembling the structure of eukaryotic proteasomes.

ATP-dependent specificity component of the Clp protease. It directs the protease to specific substrates. Can perform chaperone functions in the absence of ClpP. The sequence is that of ATP-dependent Clp protease ATP-binding subunit ClpX from Treponema denticola (strain ATCC 35405 / DSM 14222 / CIP 103919 / JCM 8153 / KCTC 15104).